Reading from the N-terminus, the 1552-residue chain is Nonribosomal peptide synthetase acrB (1552 aa).

The tract at residues 129–564 is condensation; it reads ASFAQERIWF…PVANLAIFDE (436 aa). The interval 594–999 is adenylation; the sequence is RHCKAHPRDV…RMEGSAQVKI (406 aa). The region spanning 1110–1186 is the Carrier domain; it reads APLGVEEEVM…AMARLLQPQE (77 aa). An O-(pantetheine 4'-phosphoryl)serine modification is found at S1146. Residues 1226-1464 are thiolester reductase (R) domain; the sequence is LTGATGFLGR…DFVGVDAVAS (239 aa).

Belongs to the NRP synthetase family.

It participates in secondary metabolite biosynthesis. Its function is as follows. Nonribosomal peptide synthetase; part of the cluster that mediates the biosynthesis of acurin A, a highly reduced polyketide coupled to a serine via a peptide bond. The activities of the highly reducing polyketide synthase acrA and the nonribosomal peptide synthetase acrB are collectively responsible for the synthesis of the acurin A core structure with a heptaketide backbone produced by acrA covalently fused to a L-serine by acrB. After the formation of the PK-NRP hybrid product, it is detached from acrB by reductive release to set up the formation of the lactam ring by aldol condensation. The hydrolyase acrC then catalyzes water loss to generate a double bond in the ring. This double bond is probably reduced, which is followed by three oxidations at C-22 to generate the carboxylic acid moiety, involving probably the FAD-binding monooxygenase acrE and the cytochrome P450 monooxygenases acrD and acrF. Finally, a last methylation step performed by the O-methyltransferase acrG leads to the production of acurin A. This chain is Nonribosomal peptide synthetase acrB, found in Aspergillus aculeatus (strain ATCC 16872 / CBS 172.66 / WB 5094).